Reading from the N-terminus, the 785-residue chain is Ribosome biogenesis protein BOP1 homolog (785 aa).

Residues 1–11 (MTKKLTIKRKV) are compositionally biased toward basic residues. The disordered stretch occupies residues 1–160 (MTKKLTIKRK…DSDTSDEEDI (160 aa)). 3 stretches are compositionally biased toward acidic residues: residues 45–54 (EDSTDDEGID), 61–73 (SSED…DEEG), and 85–102 (SGDD…EDDA). Over residues 103-112 (DAKKSSKNND) the composition is skewed to basic and acidic residues. A compositionally biased stretch (acidic residues) spans 150 to 159 (ADSDTSDEED). 7 WD repeats span residues 446-487 (GHTD…RTIE), 489-527 (EDVV…KLLV), 571-613 (THFK…SQIP), 616-654 (KSKG…LIKK), 657-696 (TNSK…KPYQ), 700-739 (LHRN…DLLQ), and 755-785 (REEF…RLFT).

This sequence belongs to the WD repeat BOP1/ERB1 family.

The protein localises to the nucleus. Its subcellular location is the nucleolus. It is found in the nucleoplasm. Its function is as follows. Required for maturation of ribosomal RNAs and formation of the large ribosomal subunit. The polypeptide is Ribosome biogenesis protein BOP1 homolog (Drosophila persimilis (Fruit fly)).